A 67-amino-acid chain; its full sequence is MPKMKTKSAAKKRFKITATGKVVAAAAGKRHGMIKRTNKFIRDARGTMVLAEADGKKVVKNYLPNGL.

The protein belongs to the bacterial ribosomal protein bL35 family.

The protein is Large ribosomal subunit protein bL35 of Agrobacterium fabrum (strain C58 / ATCC 33970) (Agrobacterium tumefaciens (strain C58)).